Here is a 254-residue protein sequence, read N- to C-terminus: Alcohol dehydrogenase (254 aa).

Residue 10-33 (FVAGLGGIGLDTSRELVKRDLKNL) participates in NAD(+) binding. S138 provides a ligand contact to substrate. Y151 functions as the Proton acceptor in the catalytic mechanism.

It belongs to the short-chain dehydrogenases/reductases (SDR) family. As to quaternary structure, homodimer.

It carries out the reaction a primary alcohol + NAD(+) = an aldehyde + NADH + H(+). The catalysed reaction is a secondary alcohol + NAD(+) = a ketone + NADH + H(+). This chain is Alcohol dehydrogenase (Adh), found in Drosophila guanche (Fruit fly).